Here is a 475-residue protein sequence, read N- to C-terminus: MEMESSLPHVMLVSFPGQGHISPLLRLGKIIASKGLIVTFVTTEEPLGKKMRQANNIQDGVLKPVGLGFLRFEFFEDGFVYKEDFDLLQKSLEVSGKREIKNLVKKYEKQPVRCLINNAFVPWVCDIAEELQIPSAVLWVQSCACLAAYYYYHHQLVKFPTETEPEITVDVPFKPLTLKHDEIPSFLHPSSPLSSIGGTILEQIKRLHKPFSVLIETFQELEKDTIDHMSQLCPQVNFNPIGPLFTMAKTIRSDIKGDISKPDSDCIEWLDSREPSSVVYISFGTLAFLKQNQIDEIAHGILNSGLSCLWVLRPPLEGLAIEPHVLPLELEEKGKIVEWCQQEKVLAHPAVACFLSHCGWNSTMEALTSGVPVICFPQWGDQVTNAVYMIDVFKTGLRLSRGASDERIVPREEVAERLLEATVGEKAVELRENARRWKEEAESAVAYGGTSERNFQEFVDKLVDVKTMTNINNVV.

H20 acts as the Proton acceptor in catalysis. H20 lines the an anthocyanidin pocket. Q342, H357, W360, N361, S362, and E365 together coordinate UDP-alpha-D-glucose. An anthocyanidin is bound at residue G380. Residues D381 and Q382 each contribute to the UDP-alpha-D-glucose site.

This sequence belongs to the UDP-glycosyltransferase family.

The catalysed reaction is (E)-4-coumarate + UDP-alpha-D-glucose = 4-O-(beta-D-glucosyl)-trans-4-coumarate + UDP + H(+). It carries out the reaction (E)-ferulate + UDP-alpha-D-glucose = 1-O-[(E)-feruloyl]-beta-D-glucose + UDP. It catalyses the reaction (E)-caffeate + UDP-alpha-D-glucose = 1-O-[(E)-caffeoyl]-beta-D-glucose + UDP. The enzyme catalyses (E)-sinapate + UDP-alpha-D-glucose = 1-O-(trans-sinapoyl)-beta-D-glucose + UDP. The catalysed reaction is (E)-cinnamate + UDP-alpha-D-glucose = 1-O-(trans-cinnamoyl)-beta-D-glucose + UDP. In terms of biological role, UDP-glucosyltransferase that forms glucose esters with phenylpropanoids. Glucosylates 4-coumarate, ferulate, caffeate, sinapate and cinnamate. The polypeptide is UDP-glycosyltransferase 84A4 (Arabidopsis thaliana (Mouse-ear cress)).